Reading from the N-terminus, the 344-residue chain is Uroporphyrinogen decarboxylase (344 aa).

Residues arginine 26–arginine 30, aspartate 75, tyrosine 150, serine 205, and histidine 323 contribute to the substrate site.

It belongs to the uroporphyrinogen decarboxylase family. As to quaternary structure, homodimer.

The protein localises to the cytoplasm. The catalysed reaction is uroporphyrinogen III + 4 H(+) = coproporphyrinogen III + 4 CO2. The protein operates within porphyrin-containing compound metabolism; protoporphyrin-IX biosynthesis; coproporphyrinogen-III from 5-aminolevulinate: step 4/4. Functionally, catalyzes the decarboxylation of four acetate groups of uroporphyrinogen-III to yield coproporphyrinogen-III. This Corynebacterium diphtheriae (strain ATCC 700971 / NCTC 13129 / Biotype gravis) protein is Uroporphyrinogen decarboxylase.